Consider the following 104-residue polypeptide: Urease subunit beta (104 aa).

Belongs to the urease beta subunit family. In terms of assembly, heterotrimer of UreA (gamma), UreB (beta) and UreC (alpha) subunits. Three heterotrimers associate to form the active enzyme.

The protein resides in the cytoplasm. It catalyses the reaction urea + 2 H2O + H(+) = hydrogencarbonate + 2 NH4(+). The protein operates within nitrogen metabolism; urea degradation; CO(2) and NH(3) from urea (urease route): step 1/1. The chain is Urease subunit beta from Rhodococcus opacus (strain B4).